Reading from the N-terminus, the 632-residue chain is tRNA uridine 5-carboxymethylaminomethyl modification enzyme MnmG (632 aa).

FAD-binding positions include 15–20 (GAGHAG), Ile-127, and Ser-182. 276-290 (GPRYCPSIEDKIVRF) is an NAD(+) binding site. Gln-373 is an FAD binding site.

This sequence belongs to the MnmG family. In terms of assembly, homodimer. Heterotetramer of two MnmE and two MnmG subunits. FAD is required as a cofactor.

It is found in the cytoplasm. Its function is as follows. NAD-binding protein involved in the addition of a carboxymethylaminomethyl (cmnm) group at the wobble position (U34) of certain tRNAs, forming tRNA-cmnm(5)s(2)U34. The chain is tRNA uridine 5-carboxymethylaminomethyl modification enzyme MnmG from Streptococcus pyogenes serotype M6 (strain ATCC BAA-946 / MGAS10394).